Here is a 503-residue protein sequence, read N- to C-terminus: ATP synthase subunit alpha (503 aa).

170–177 (GDKQTGKT) contributes to the ATP binding site.

Belongs to the ATPase alpha/beta chains family. As to quaternary structure, F-type ATPases have 2 components, CF(1) - the catalytic core - and CF(0) - the membrane proton channel. CF(1) has five subunits: alpha(3), beta(3), gamma(1), delta(1), epsilon(1). CF(0) has three main subunits: a(1), b(2) and c(9-12). The alpha and beta chains form an alternating ring which encloses part of the gamma chain. CF(1) is attached to CF(0) by a central stalk formed by the gamma and epsilon chains, while a peripheral stalk is formed by the delta and b chains.

Its subcellular location is the cell inner membrane. It carries out the reaction ATP + H2O + 4 H(+)(in) = ADP + phosphate + 5 H(+)(out). Its function is as follows. Produces ATP from ADP in the presence of a proton gradient across the membrane. The alpha chain is a regulatory subunit. In Helicobacter acinonychis (strain Sheeba), this protein is ATP synthase subunit alpha.